A 226-amino-acid chain; its full sequence is ATP-dependent dethiobiotin synthetase BioD (226 aa).

An ATP-binding site is contributed by 12–17 (EVGKTV). A Mg(2+)-binding site is contributed by threonine 16. Residue lysine 39 is part of the active site. A substrate-binding site is contributed by threonine 43. Residues aspartate 47, 108–111 (EALG), 168–169 (NC), and 200–202 (PYI) each bind ATP. Mg(2+) is bound by residues aspartate 47 and glutamate 108.

The protein belongs to the dethiobiotin synthetase family. As to quaternary structure, homodimer. The cofactor is Mg(2+).

Its subcellular location is the cytoplasm. It carries out the reaction (7R,8S)-7,8-diammoniononanoate + CO2 + ATP = (4R,5S)-dethiobiotin + ADP + phosphate + 3 H(+). The enzyme catalyses (7R,8S)-8-amino-7-(carboxyamino)nonanoate + ATP = (4R,5S)-dethiobiotin + ADP + phosphate + H(+). Its pathway is cofactor biosynthesis; biotin biosynthesis; biotin from 7,8-diaminononanoate: step 1/2. Functionally, catalyzes a mechanistically unusual reaction, the ATP-dependent insertion of CO2 between the N7 and N8 nitrogen atoms of 7,8-diaminopelargonic acid (DAPA, also called 7,8-diammoniononanoate) to form a ureido ring. This cyanobacterium does not encode bioA (which catalyzes the formation of the precursor for this reaction in the cannonical pathway), instead it encodes bioU, which replaces bioA and also performs the first half of the cannonical BioD reaction. Thus in this organism BioD has a different substrate. The chain is ATP-dependent dethiobiotin synthetase BioD from Gloeothece citriformis (strain PCC 7424) (Cyanothece sp. (strain PCC 7424)).